An 801-amino-acid chain; its full sequence is Growth-differentiation transition protein 7 (801 aa).

The signal sequence occupies residues 1–22 (MIKTILIKLILLVIFCYHFLFA).

It belongs to the GDT family.

The protein resides in the secreted. In Dictyostelium discoideum (Social amoeba), this protein is Growth-differentiation transition protein 7 (gdt7).